We begin with the raw amino-acid sequence, 91 residues long: Transcription factor znf27 (91 aa).

It localises to the nucleus. Its function is as follows. Transcription factor; part of the gene cluster 27 that mediates the biosynthesis of asparasone A, a sclerotium-specific anthraquinone pigment important for sclerotial survival. Controls the expression of the non-reducing polyketide synthase (NRPKS) pks27. The protein is Transcription factor znf27 of Aspergillus flavus (strain ATCC 200026 / FGSC A1120 / IAM 13836 / NRRL 3357 / JCM 12722 / SRRC 167).